Here is a 605-residue protein sequence, read N- to C-terminus: MSSSLFILDENLEPLVSKNIRALPNLSSVLSSFKQCYHDGSPPILSQNDWFFIHLKRDFLHFVSVIHTTDKPNIDLMTILAFLEQFYHLLQKYFEIEVLTKNVILDNILLVLELIDECIDFGIVQVTDPSIIKDYIRVKVNVPRVTVDNEEWSPGEESSSSSGSDSDSEYSNTNKRKDKKKKRKKKKGTKGKSVGKSKLKSIMVNNKENRGINVVETVKETLRNKNDTGKEAANDELPNDGNDLYINGDIAKTIIMPISWRTKGIHYAKNEFFLDVIERVQYLMDFEKGVIRKNLIHGEIVCRCYLSGMPKLKISINKILNRDPQFMSNSSFHQCVSLDSINTIEKDEEKNSDDDAGLQAATDAREIEFIPPDGEFVLCQYELKRHVKDAPMVRLKDFEIKPKLKKFKIQIVTKIQTNFKPTNSTSKLNVRIPLTKVFQEYKIDLSKQIRFKANIGKVVFNLSDDFLLWEIQTMKGHREHSTNKSSQYNSDEDDPNTCASMVAEFPLFNQEEYDRLQEEMKTSMNPPPLRTGPRLEELYRQVHDQQTSHVTPRDKLVNIDFEIPYCTCSGLKVEYLKVEEPQLQYQSFPWVRYKTVSDEEYAYIV.

Residues 150–196 (EEWSPGEESSSSSGSDSDSEYSNTNKRKDKKKKRKKKKGTKGKSVGK) form a disordered region. Over residues 155–171 (GEESSSSSGSDSDSEYS) the composition is skewed to low complexity. A compositionally biased stretch (basic residues) spans 174–196 (NKRKDKKKKRKKKKGTKGKSVGK). The region spanning 269 to 604 (KNEFFLDVIE…TVSDEEYAYI (336 aa)) is the MHD domain.

Belongs to the adaptor complexes medium subunit family. In terms of assembly, component of the AP-1R complex composed of at least APM2, APL4 and APS1. Interacts with MIL1. Interacts with APL2.

It is found in the golgi apparatus membrane. It localises to the early endosome membrane. The protein localises to the cytoplasmic vesicle. The protein resides in the clathrin-coated vesicle membrane. Component of the AP-1-related (AP-1R) complex, an adapter protein complex that mediates of cargo protein sorting in clathrin-coated vesicles. AP-1R has a specific role in SNARE SNC1 sorting. In contrast to the APM1-containing AP-1 complex, AP-1R is incapable of sorting CHS3. The sequence is that of Adaptin medium chain homolog APM2 (APM2) from Saccharomyces cerevisiae (strain ATCC 204508 / S288c) (Baker's yeast).